A 67-amino-acid chain; its full sequence is MKNVFKTLAVLLTLFSLTGCGLKGPLYFPPADKNAPPPTKKVDSQTQSTMPDKNDRATGDGPSQVNY.

The N-terminal stretch at 1–19 (MKNVFKTLAVLLTLFSLTG) is a signal peptide. The N-palmitoyl cysteine moiety is linked to residue cysteine 20. Cysteine 20 carries the S-diacylglycerol cysteine lipid modification. A disordered region spans residues 26–67 (LYFPPADKNAPPPTKKVDSQTQSTMPDKNDRATGDGPSQVNY).

The protein belongs to the LptM family. As to quaternary structure, interacts with the outer membrane embedded portion of the LPS translocon formed by LptD and LptE (LptDE).

It localises to the cell outer membrane. Component of the lipopolysaccharide (LPS) transport (Lpt) pathway that promotes efficient assembly of the outer membrane LPS translocon (LptDE) by the BAM complex. Facilitates oxidative maturation of LptD by stabilizing a conformation of the LPS translocon in which LptD can efficiently acquire native disulfide bonds, thereby activating the LPS translocon. The sequence is that of LPS-assembly lipoprotein LptM from Salmonella typhi.